Reading from the N-terminus, the 93-residue chain is Putative pterin-4-alpha-carbinolamine dehydratase (93 aa).

This sequence belongs to the pterin-4-alpha-carbinolamine dehydratase family.

It carries out the reaction (4aS,6R)-4a-hydroxy-L-erythro-5,6,7,8-tetrahydrobiopterin = (6R)-L-erythro-6,7-dihydrobiopterin + H2O. The protein is Putative pterin-4-alpha-carbinolamine dehydratase of Roseiflexus sp. (strain RS-1).